The chain runs to 253 residues: Chitooligosaccharide deacetylase (253 aa).

The Mg(2+) site is built by His-61 and His-126.

It belongs to the YdjC deacetylase family. ChbG subfamily. In terms of assembly, homodimer. Requires Mg(2+) as cofactor.

It is found in the cytoplasm. It carries out the reaction N,N'-diacetylchitobiose + H2O = N-acetyl-beta-D-glucosaminyl-(1-&gt;4)-D-glucosamine + acetate. The catalysed reaction is diacetylchitobiose-6'-phosphate + H2O = N'-monoacetylchitobiose-6'-phosphate + acetate. It participates in glycan degradation; chitin degradation. Its function is as follows. Involved in the degradation of chitin. ChbG is essential for growth on the acetylated chitooligosaccharides chitobiose and chitotriose but is dispensable for growth on cellobiose and chitosan dimer, the deacetylated form of chitobiose. Deacetylation of chitobiose-6-P and chitotriose-6-P is necessary for both the activation of the chb promoter by the regulatory protein ChbR and the hydrolysis of phosphorylated beta-glucosides by the phospho-beta-glucosidase ChbF. Catalyzes the removal of only one acetyl group from chitobiose-6-P to yield monoacetylchitobiose-6-P, the inducer of ChbR and the substrate of ChbF. The polypeptide is Chitooligosaccharide deacetylase (Serratia marcescens).